Consider the following 409-residue polypeptide: Multifunctional CCA protein (409 aa).

Gly-8 and Arg-11 together coordinate ATP. CTP is bound by residues Gly-8 and Arg-11. Mg(2+)-binding residues include Asp-21 and Asp-23. ATP-binding residues include Arg-91, Arg-137, and Arg-140. 3 residues coordinate CTP: Arg-91, Arg-137, and Arg-140. The HD domain occupies 228–329 (TGVHVLSVLE…LELLQSFDVY (102 aa)).

It belongs to the tRNA nucleotidyltransferase/poly(A) polymerase family. Bacterial CCA-adding enzyme type 1 subfamily. As to quaternary structure, monomer. Can also form homodimers and oligomers. Mg(2+) serves as cofactor. The cofactor is Ni(2+).

It catalyses the reaction a tRNA precursor + 2 CTP + ATP = a tRNA with a 3' CCA end + 3 diphosphate. The enzyme catalyses a tRNA with a 3' CCA end + 2 CTP + ATP = a tRNA with a 3' CCACCA end + 3 diphosphate. In terms of biological role, catalyzes the addition and repair of the essential 3'-terminal CCA sequence in tRNAs without using a nucleic acid template. Adds these three nucleotides in the order of C, C, and A to the tRNA nucleotide-73, using CTP and ATP as substrates and producing inorganic pyrophosphate. tRNA 3'-terminal CCA addition is required both for tRNA processing and repair. Also involved in tRNA surveillance by mediating tandem CCA addition to generate a CCACCA at the 3' terminus of unstable tRNAs. While stable tRNAs receive only 3'-terminal CCA, unstable tRNAs are marked with CCACCA and rapidly degraded. The sequence is that of Multifunctional CCA protein from Pseudomonas savastanoi pv. phaseolicola (strain 1448A / Race 6) (Pseudomonas syringae pv. phaseolicola (strain 1448A / Race 6)).